Here is a 339-residue protein sequence, read N- to C-terminus: N-acetylmuramate/N-acetylglucosamine kinase (339 aa).

This sequence belongs to the kinase AmgK family.

The catalysed reaction is N-acetyl-D-muramate + ATP = N-acetyl-alpha-D-muramate 1-phosphate + ADP + H(+). The enzyme catalyses N-acetyl-D-glucosamine + ATP = N-acetyl-alpha-D-glucosamine 1-phosphate + ADP + H(+). It participates in cell wall biogenesis; peptidoglycan recycling. Functionally, sugar kinase that catalyzes the ATP-dependent phosphorylation of N-acetylmuramate (MurNAc) and N-acetylglucosamine (GlcNAc) at its C1 hydroxyl group, leading to MurNAc alpha-1P and GlcNAc alpha-1P, respectively. Is involved in peptidoglycan recycling as part of a cell wall recycling pathway that bypasses de novo biosynthesis of the peptidoglycan precursor UDP-MurNAc. Plays a role in intrinsic resistance to fosfomycin, which targets the de novo synthesis of UDP-MurNAc. Is also able to use N-acetylgalactosamine (GalNAc) as a substrate, but not N-acetylmannosamine, N-deacetylated sugars or glucose. This Pseudomonas putida (strain ATCC 47054 / DSM 6125 / CFBP 8728 / NCIMB 11950 / KT2440) protein is N-acetylmuramate/N-acetylglucosamine kinase.